A 176-amino-acid polypeptide reads, in one-letter code: Peptide deformylase 1 (176 aa).

Residues Cys99 and His141 each contribute to the Fe cation site. The active site involves Glu142. A Fe cation-binding site is contributed by His145.

This sequence belongs to the polypeptide deformylase family. Fe(2+) serves as cofactor.

The catalysed reaction is N-terminal N-formyl-L-methionyl-[peptide] + H2O = N-terminal L-methionyl-[peptide] + formate. Removes the formyl group from the N-terminal Met of newly synthesized proteins. Requires at least a dipeptide for an efficient rate of reaction. N-terminal L-methionine is a prerequisite for activity but the enzyme has broad specificity at other positions. The chain is Peptide deformylase 1 from Nitrosomonas europaea (strain ATCC 19718 / CIP 103999 / KCTC 2705 / NBRC 14298).